The primary structure comprises 61 residues: Small ribosomal subunit protein bS21 (61 aa).

Positions 34–61 are disordered; sequence KREHYESPSVKRKKKSEAARKRKYKYNK. Over residues 43–61 the composition is skewed to basic residues; sequence VKRKKKSEAARKRKYKYNK.

It belongs to the bacterial ribosomal protein bS21 family.

This Thermoanaerobacter pseudethanolicus (strain ATCC 33223 / 39E) (Clostridium thermohydrosulfuricum) protein is Small ribosomal subunit protein bS21.